The chain runs to 430 residues: Palmitoyltransferase ZDHHC11 (430 aa).

Residues 1-46 (MTNLNCFGRHRRRTAPHNATGSRSELVAPPIHSRINGWSSPLHSFQ) lie on the Cytoplasmic side of the membrane. Residues 47 to 67 (FIALLIFSFMAIVAFGIYVPL) traverse the membrane as a helical segment. Residues 68–76 (LPAPWSYAA) are Lumenal-facing. A helical transmembrane segment spans residues 77 to 97 (YALIGSAFVLHLFSHVTAVTI). Over 98–176 (DPADVNVRRR…GGRNYWFFFT (79 aa)) the chain is Cytoplasmic. The DHHC domain occupies 129–179 (LHCTLCEVDVSPKAKHCSTCNKCIADFDHHCKWLNNCVGGRNYWFFFTAVS). Residue C159 is the S-palmitoyl cysteine intermediate of the active site. A helical membrane pass occupies residues 177–197 (AVSSAVIGVILLIPLVLFVFI). Over 198–234 (EHYVNPAVLRTAPQFQTVKGNGTWLVFLPVAPVETSS) the chain is Lumenal. Residues 235–255 (ISLLVVSFITALLSLAALLLL) traverse the membrane as a helical segment. Over 256–430 (CHLLCFHIYL…QYLHFKQKMP (175 aa)) the chain is Cytoplasmic.

This sequence belongs to the DHHC palmitoyltransferase family.

It is found in the endoplasmic reticulum membrane. It carries out the reaction L-cysteinyl-[protein] + hexadecanoyl-CoA = S-hexadecanoyl-L-cysteinyl-[protein] + CoA. In terms of biological role, endoplasmic reticulum-localized palmitoyltransferase that could catalyze the addition of palmitate onto protein substrates. This Danio rerio (Zebrafish) protein is Palmitoyltransferase ZDHHC11.